The sequence spans 131 residues: D-ribose pyranase (131 aa).

His20 (proton donor) is an active-site residue. Substrate is bound by residues Asp28, His98, and Tyr120–Asn122.

It belongs to the RbsD / FucU family. RbsD subfamily. In terms of assembly, homodecamer.

It localises to the cytoplasm. The catalysed reaction is beta-D-ribopyranose = beta-D-ribofuranose. The protein operates within carbohydrate metabolism; D-ribose degradation; D-ribose 5-phosphate from beta-D-ribopyranose: step 1/2. Catalyzes the interconversion of beta-pyran and beta-furan forms of D-ribose. In Bacillus thuringiensis (strain Al Hakam), this protein is D-ribose pyranase.